A 483-amino-acid chain; its full sequence is MSVRVTQKSYKMSTSGPRAFSSRSFTSGPGARISSSSFSRVGSSSSSFRGSLGGFGGAGVGGITAVTVNQSLLNPLKLEVDPNIQAVRTQEKEQIKTLNNKFASFIDKVRFLEQQNKMLETKWSLLQQQKTSRSNMDNMFESYINNLRRQLEALGQEKLKLEVELGNMQGLVEDFKNKYEDEINKRTEMENEFVLIKKDVDEAYMNKVELESRLEGLTDEINFLRQIHEEEIRELQSQISDTSVVLSMDNSRSLDMDSIIAEVRAQYEEIANRSRAEAETMYQIKYEELQTLAGKHGDDLRRSKTEISEMNRNISRLQAEIDALKGQRATLEAAIADAEQRGELAVKDANAKLEDLKNALQKAKQDMARQLREYQELMNVKLALDIEIATYRKLLEGEESRLESGMQNMSIHTKTTSGYAGGLSSSYGGLTSPGFSYGMSSFQPGFGSVGGSSTYSRTKAVVVKKIETRDGKLVSESSDIMSK.

The span at 1–25 (MSVRVTQKSYKMSTSGPRAFSSRSF) shows a compositional bias: polar residues. Positions 1-43 (MSVRVTQKSYKMSTSGPRAFSSRSFTSGPGARISSSSFSRVGS) are disordered. The tract at residues 1-90 (MSVRVTQKSY…DPNIQAVRTQ (90 aa)) is head. Ser9 carries the post-translational modification Phosphoserine; by PKC/PRKCE. A Glycyl lysine isopeptide (Lys-Gly) (interchain with G-Cter in SUMO2) cross-link involves residue Lys11. A phosphoserine mark is found at Ser13, Ser15, Ser21, and Ser22. An Omega-N-methylarginine modification is found at Arg23. Ser24 carries the post-translational modification Phosphoserine; by PKC/PRKCE. Ser24 bears the Phosphoserine mark. Thr26 bears the Phosphothreonine mark. Over residues 26 to 43 (TSGPGARISSSSFSRVGS) the composition is skewed to low complexity. Phosphoserine is present on Ser27. Arg32 is subject to Omega-N-methylarginine. Phosphoserine is present on residues Ser34, Ser37, and Ser39. An Omega-N-methylarginine modification is found at Arg40. 3 positions are modified to phosphoserine: Ser43, Ser44, and Ser47. At Arg49 the chain carries Asymmetric dimethylarginine; alternate. Arg49 carries the post-translational modification Omega-N-methylarginine; alternate. Ser51 is modified (phosphoserine). Residues 91-126 (EKEQIKTLNNKFASFIDKVRFLEQQNKMLETKWSLL) are coil 1A. The IF rod domain occupies 91-402 (EKEQIKTLNN…KLLEGEESRL (312 aa)). Lys101 is subject to N6-malonyllysine. Residues Lys122 and Lys130 each participate in a glycyl lysine isopeptide (Lys-Gly) (interchain with G-Cter in SUMO2) cross-link. The interval 127-143 (QQQKTSRSNMDNMFESY) is linker 1. Positions 144 to 235 (INNLRRQLEA…QIHEEEIREL (92 aa)) are coil 1B. A Glycyl lysine isopeptide (Lys-Gly) (interchain with G-Cter in SUMO1); alternate cross-link involves residue Lys197. Lys197 participates in a covalent cross-link: Glycyl lysine isopeptide (Lys-Gly) (interchain with G-Cter in SUMO2); alternate. Lys207 is modified (N6-acetyllysine). Positions 236 to 259 (QSQISDTSVVLSMDNSRSLDMDSI) are linker 12. Residues Ser253, Ser258, and Ser274 each carry the phosphoserine modification. The interval 260–398 (IAEVRAQYEE…ATYRKLLEGE (139 aa)) is coil 2. Residues 261-382 (AEVRAQYEEI…EYQELMNVKL (122 aa)) form a necessary for interaction with PNN region. Lys285 is covalently cross-linked (Glycyl lysine isopeptide (Lys-Gly) (interchain with G-Cter in SUMO2)). Residue Lys295 forms a Glycyl lysine isopeptide (Lys-Gly) (interchain with G-Cter in SUMO2); alternate linkage. Lys295 is modified (N6-acetyllysine; alternate). A Glycyl lysine isopeptide (Lys-Gly) (interchain with G-Cter in SUMO2) cross-link involves residue Lys304. A Glycyl lysine isopeptide (Lys-Gly) (interchain with G-Cter in SUMO2); alternate cross-link involves residue Lys325. Lys325 is modified (N6-acetyllysine; alternate). Lys393 is covalently cross-linked (Glycyl lysine isopeptide (Lys-Gly) (interchain with G-Cter in SUMO2)). Residues 399–483 (ESRLESGMQN…VSESSDIMSK (85 aa)) are tail. Phosphoserine is present on residues Ser400, Ser404, Ser410, Ser417, Ser424, Ser426, and Ser432. Lys472 is covalently cross-linked (Glycyl lysine isopeptide (Lys-Gly) (interchain with G-Cter in SUMO1); alternate). Lys472 is covalently cross-linked (Glycyl lysine isopeptide (Lys-Gly) (interchain with G-Cter in SUMO2); alternate). Phosphoserine is present on residues Ser475, Ser477, Ser478, and Ser482.

The protein belongs to the intermediate filament family. Heterotetramer of two type I and two type II keratins. Forms a heterodimer with KRT18. Associates with KRT20. Interacts with PNN. When associated with KRT19, interacts with DMD. Interacts with TCHP. Interacts with APEX1. Interacts with GPER1. Interacts with EPPK1. Interacts with PKP1 and PKP2. Post-translationally, O-glycosylated. O-GlcNAcylation at multiple sites increases solubility, and decreases stability by inducing proteasomal degradation. O-glycosylated (O-GlcNAcylated), in a cell cycle-dependent manner. As to expression, expressed in cardiac and striated muscle. Expressed at Z-lines within the muscle fibers and at Z-line and M-line domains at costameres at the sarcolemmal membrane (at protein level). Observed in coagulating gland, bladder, salivary gland, kidney, spleen, thymus, lung and heart. Also observed in ventral prostate, seminal vesicle and liver where expression increases following castration.

It is found in the cytoplasm. It localises to the nucleus. The protein localises to the nucleoplasm. The protein resides in the nucleus matrix. Functionally, together with KRT19, helps to link the contractile apparatus to dystrophin at the costameres of striated muscle. This Rattus norvegicus (Rat) protein is Keratin, type II cytoskeletal 8 (Krt8).